The chain runs to 544 residues: 4-coumarate--CoA ligase 1 (544 aa).

ATP-binding residues include serine 190, serine 191, glycine 192, threonine 193, threonine 194, and lysine 198. Tyrosine 240 contacts (E)-4-coumaroyl-AMP. Lysine 261 contributes to the CoA binding site. Residues 263–332 (DIVPFLELIQ…AKFPNAKLGQ (70 aa)) are SBD1. Residues alanine 310, glutamine 332, glycine 333, threonine 337, and methionine 345 each coordinate (E)-4-coumaroyl-AMP. Residues glutamine 332, glycine 333, and threonine 337 each coordinate ATP. An SBD2 region spans residues 333–400 (GYGMTEAGPV…IRGDQIMKGY (68 aa)). Residues aspartate 421 and arginine 436 each contribute to the ATP site. (E)-4-coumaroyl-AMP contacts are provided by lysine 438 and lysine 442. The CoA site is built by lysine 444 and glycine 445. ATP is bound at residue lysine 527.

The protein belongs to the ATP-dependent AMP-binding enzyme family. The cofactor is Mg(2+).

The catalysed reaction is (E)-4-coumarate + ATP + CoA = (E)-4-coumaroyl-CoA + AMP + diphosphate. The enzyme catalyses (E)-4-coumarate + ATP + H(+) = (E)-4-coumaroyl-AMP + diphosphate. It catalyses the reaction (E)-4-coumaroyl-AMP + CoA = (E)-4-coumaroyl-CoA + AMP + H(+). It participates in phytoalexin biosynthesis; 3,4',5-trihydroxystilbene biosynthesis; 3,4',5-trihydroxystilbene from trans-4-coumarate: step 1/2. Carboxylate--CoA ligase that may use 4-coumarate as substrate. Follows a two-step reaction mechanism, wherein the carboxylate substrate first undergoes adenylation by ATP, followed by a thioesterification in the presence of CoA to yield the final CoA thioester. This is 4-coumarate--CoA ligase 1 (4CL1) from Petroselinum crispum (Parsley).